Consider the following 77-residue polypeptide: Acyl carrier protein (77 aa).

The region spanning 1 to 75 (MVFEKVKDII…DVVNYIKAHT (75 aa)) is the Carrier domain. Serine 35 bears the O-(pantetheine 4'-phosphoryl)serine mark.

Belongs to the acyl carrier protein (ACP) family. 4'-phosphopantetheine is transferred from CoA to a specific serine of apo-ACP by AcpS. This modification is essential for activity because fatty acids are bound in thioester linkage to the sulfhydryl of the prosthetic group.

The protein localises to the cytoplasm. Its pathway is lipid metabolism; fatty acid biosynthesis. Carrier of the growing fatty acid chain in fatty acid biosynthesis. The sequence is that of Acyl carrier protein from Clostridium acetobutylicum (strain ATCC 824 / DSM 792 / JCM 1419 / IAM 19013 / LMG 5710 / NBRC 13948 / NRRL B-527 / VKM B-1787 / 2291 / W).